Here is a 349-residue protein sequence, read N- to C-terminus: Isopentenyl-diphosphate delta-isomerase (349 aa).

6–7 lines the substrate pocket; the sequence is RK. FMN-binding positions include 62–64, S93, and N122; that span reads AMT. Q152 contacts substrate. Mg(2+) is bound at residue E153. FMN-binding positions include K184, T214, 259-261, and 280-281; these read GVR and AG.

Belongs to the IPP isomerase type 2 family. As to quaternary structure, homooctamer. Dimer of tetramers. It depends on FMN as a cofactor. The cofactor is NADPH. Requires Mg(2+) as cofactor.

The protein localises to the cytoplasm. It carries out the reaction isopentenyl diphosphate = dimethylallyl diphosphate. Functionally, involved in the biosynthesis of isoprenoids. Catalyzes the 1,3-allylic rearrangement of the homoallylic substrate isopentenyl (IPP) to its allylic isomer, dimethylallyl diphosphate (DMAPP). The polypeptide is Isopentenyl-diphosphate delta-isomerase (Geobacillus sp. (strain WCH70)).